A 129-amino-acid chain; its full sequence is Serum amyloid A protein (129 aa).

The signal sequence occupies residues 1-18; that stretch reads MKLFPGLLFCSLVLGVSG. Pyrrolidone carboxylic acid is present on Gln-19. The interval 92–129 is disordered; sequence GDSGHGAEDSKADQAANEWGRSGKDPNHFRPAGLPDKY. A propeptide spans 112 to 129 (often cleaved during amyloidogenesis); it reads RSGKDPNHFRPAGLPDKY.

It belongs to the SAA family. In terms of processing, this protein is the precursor of amyloid protein A, which is formed by the removal of residues from the C-terminal end. Expressed by the liver; secreted in plasma.

The protein resides in the secreted. Major acute phase reactant. Apolipoprotein of the HDL complex. The protein is Serum amyloid A protein (SAA1) of Canis lupus familiaris (Dog).